Here is a 159-residue protein sequence, read N- to C-terminus: Phosphopantetheine adenylyltransferase (159 aa).

Ser8 is a substrate binding site. Residues Ser8 to Phe9 and His16 each bind ATP. Residues Lys40, Thr72, and Arg86 each coordinate substrate. ATP-binding positions include Gly87–Arg89, Glu97, and His122–Ser128.

Belongs to the bacterial CoaD family. As to quaternary structure, homohexamer. Mg(2+) is required as a cofactor.

The protein resides in the cytoplasm. It catalyses the reaction (R)-4'-phosphopantetheine + ATP + H(+) = 3'-dephospho-CoA + diphosphate. The protein operates within cofactor biosynthesis; coenzyme A biosynthesis; CoA from (R)-pantothenate: step 4/5. Reversibly transfers an adenylyl group from ATP to 4'-phosphopantetheine, yielding dephospho-CoA (dPCoA) and pyrophosphate. The polypeptide is Phosphopantetheine adenylyltransferase (Synechococcus sp. (strain JA-2-3B'a(2-13)) (Cyanobacteria bacterium Yellowstone B-Prime)).